Consider the following 191-residue polypeptide: GDP-mannose pyrophosphatase (191 aa).

GDP-alpha-D-mannose is bound by residues Tyr17, 38-40, Arg67, and 85-87; these read KRE and AGL. The Nudix hydrolase domain occupies 43–180; it reads DRGNGATILL…EIRDGKTVLL (138 aa). Mg(2+) contacts are provided by Ala85, Glu100, and Glu104. The Nudix box signature appears at 86-106; sequence GLLDNDEPEACIRKEAIEETG. GDP-alpha-D-mannose is bound by residues Glu104, Glu127, 150–151, and Lys176; that span reads DE. Glu151 serves as a coordination point for Mg(2+).

Belongs to the Nudix hydrolase family. NudK subfamily. Homodimer. It depends on Mg(2+) as a cofactor.

The catalysed reaction is GDP-alpha-D-mannose + H2O = alpha-D-mannose 1-phosphate + GMP + 2 H(+). In terms of biological role, nucleoside diphosphate sugar hydrolase that hydrolyzes GDP-mannose as its preferred substrate, yielding GMP and mannose-1-phosphate. The protein is GDP-mannose pyrophosphatase (nudK) of Citrobacter koseri (strain ATCC BAA-895 / CDC 4225-83 / SGSC4696).